The primary structure comprises 129 residues: ATP synthase epsilon chain (129 aa).

This sequence belongs to the ATPase epsilon chain family. As to quaternary structure, F-type ATPases have 2 components, CF(1) - the catalytic core - and CF(0) - the membrane proton channel. CF(1) has five subunits: alpha(3), beta(3), gamma(1), delta(1), epsilon(1). CF(0) has three main subunits: a, b and c.

The protein localises to the cell inner membrane. In terms of biological role, produces ATP from ADP in the presence of a proton gradient across the membrane. In Campylobacter jejuni subsp. jejuni serotype O:6 (strain 81116 / NCTC 11828), this protein is ATP synthase epsilon chain.